Consider the following 233-residue polypeptide: Small ribosomal subunit protein uS7m (233 aa).

A mitochondrion-targeting transit peptide spans Met1–Tyr28.

Belongs to the universal ribosomal protein uS7 family. In terms of assembly, component of the mitochondrial ribosome small subunit (28S) which comprises a 12S rRNA and about 30 distinct proteins.

Its subcellular location is the mitochondrion. This is Small ribosomal subunit protein uS7m (mrps7) from Xenopus laevis (African clawed frog).